An 827-amino-acid chain; its full sequence is DNA gyrase subunit A (827 aa).

The Topo IIA-type catalytic domain maps to 38 to 501 (LPDARDGLKP…SYENIDIEDL (464 aa)). Y126 serves as the catalytic O-(5'-phospho-DNA)-tyrosine intermediate. The GyrA-box signature appears at 528–534 (QNRGGKG).

The protein belongs to the type II topoisomerase GyrA/ParC subunit family. Heterotetramer, composed of two GyrA and two GyrB chains. In the heterotetramer, GyrA contains the active site tyrosine that forms a transient covalent intermediate with DNA, while GyrB binds cofactors and catalyzes ATP hydrolysis.

It localises to the cytoplasm. It carries out the reaction ATP-dependent breakage, passage and rejoining of double-stranded DNA.. Its function is as follows. A type II topoisomerase that negatively supercoils closed circular double-stranded (ds) DNA in an ATP-dependent manner to modulate DNA topology and maintain chromosomes in an underwound state. Negative supercoiling favors strand separation, and DNA replication, transcription, recombination and repair, all of which involve strand separation. Also able to catalyze the interconversion of other topological isomers of dsDNA rings, including catenanes and knotted rings. Type II topoisomerases break and join 2 DNA strands simultaneously in an ATP-dependent manner. In Helicobacter pylori (strain ATCC 700392 / 26695) (Campylobacter pylori), this protein is DNA gyrase subunit A.